A 676-amino-acid chain; its full sequence is F420-dependent formate dehydrogenase 2 subunit alpha (676 aa).

In terms of domain architecture, 4Fe-4S Mo/W bis-MGD-type spans 4–60 (FKVVHTICPYCGTGCGIDLVVKDGKVVDSHPFKRHPVNEGKVCIKGNYCYEFVHSED). The [4Fe-4S] cluster site is built by C11, C14, C18, and C46. U133 is a non-standard amino acid (selenocysteine).

Belongs to the prokaryotic molybdopterin-containing oxidoreductase family. In terms of assembly, dimer of an alpha (FdhA2) and a beta (FdhB2) subunit. Requires [4Fe-4S] cluster as cofactor. It depends on Mo-bis(molybdopterin guanine dinucleotide) as a cofactor. Zn(2+) serves as cofactor.

The enzyme catalyses oxidized coenzyme F420-(gamma-L-Glu)(n) + formate + 2 H(+) = reduced coenzyme F420-(gamma-L-Glu)(n) + CO2. In terms of biological role, catalyzes the oxidation of formate to carbon dioxide, with coenzyme F420 as the electron acceptor. In vitro can also use methyl viologen as electron acceptor. This Methanococcus maripaludis (strain DSM 14266 / JCM 13030 / NBRC 101832 / S2 / LL) protein is F420-dependent formate dehydrogenase 2 subunit alpha.